The chain runs to 170 residues: ATP synthase subunit b, chloroplastic (170 aa).

A helical membrane pass occupies residues 15–35 (ILETNVINLAVVVGVVVFFVG).

This sequence belongs to the ATPase B chain family. As to quaternary structure, F-type ATPases have 2 components, F(1) - the catalytic core - and F(0) - the membrane proton channel. F(1) has five subunits: alpha(3), beta(3), gamma(1), delta(1), epsilon(1). F(0) has four main subunits: a(1), b(1), b'(1) and c(10-14). The alpha and beta chains form an alternating ring which encloses part of the gamma chain. F(1) is attached to F(0) by a central stalk formed by the gamma and epsilon chains, while a peripheral stalk is formed by the delta, b and b' chains.

It is found in the plastid. The protein localises to the chloroplast thylakoid membrane. Functionally, f(1)F(0) ATP synthase produces ATP from ADP in the presence of a proton or sodium gradient. F-type ATPases consist of two structural domains, F(1) containing the extramembraneous catalytic core and F(0) containing the membrane proton channel, linked together by a central stalk and a peripheral stalk. During catalysis, ATP synthesis in the catalytic domain of F(1) is coupled via a rotary mechanism of the central stalk subunits to proton translocation. Component of the F(0) channel, it forms part of the peripheral stalk, linking F(1) to F(0). The protein is ATP synthase subunit b, chloroplastic of Stigeoclonium helveticum (Green alga).